A 116-amino-acid polypeptide reads, in one-letter code: Prefoldin subunit beta (116 aa).

The protein belongs to the prefoldin subunit beta family. As to quaternary structure, heterohexamer of two alpha and four beta subunits.

It localises to the cytoplasm. Its function is as follows. Molecular chaperone capable of stabilizing a range of proteins. Seems to fulfill an ATP-independent, HSP70-like function in archaeal de novo protein folding. This Archaeoglobus fulgidus (strain ATCC 49558 / DSM 4304 / JCM 9628 / NBRC 100126 / VC-16) protein is Prefoldin subunit beta (pfdB).